The chain runs to 266 residues: MINYRHIVFCLCVMVVVDSRLTPYLAAIEQVDPIVKIVLPIVGRFDPEEFVTSWQGNNPCEWFGTNCLEGIIIGISFISLNLIGTISPHFADLTSLRVIDLSHNRLKCTIPFEITKLKNLTIVDVSYNQLHGEVPRVRGIVILTERNPNIESTCLLVPSPTRNKNKPTVLVLLLGILVGLVVAGGASFGFYLYRIRKQPKRLQEPNEAVTLTQQQSSDESLVSDESYVISLQLQYRVLRRFSWVSKGPLLLTRQLKTNQNPHLPYM.

An N-terminal signal peptide occupies residues 1 to 19 (MINYRHIVFCLCVMVVVDS). Residues 20–169 (RLTPYLAAIE…PTRNKNKPTV (150 aa)) lie on the Extracellular side of the membrane. 2 LRR repeats span residues 93–117 (LTSL…ITKL) and 119–143 (NLTI…IVIL). A glycan (N-linked (GlcNAc...) asparagine) is linked at N119. The chain crosses the membrane as a helical span at residues 170–190 (LVLLLGILVGLVVAGGASFGF). At 191 to 266 (YLYRIRKQPK…TNQNPHLPYM (76 aa)) the chain is on the cytoplasmic side.

The protein belongs to the RLP family.

The protein resides in the cell membrane. This is Receptor-like protein 5 from Arabidopsis thaliana (Mouse-ear cress).